We begin with the raw amino-acid sequence, 318 residues long: Trans-prenyltransferase (318 aa).

Residues 1 to 21 form a helical membrane-spanning segment; sequence MLHLIYISIIVVLIIILISYT. Lys85, Arg88, and His122 together coordinate isopentenyl diphosphate. Residues Asp129 and Asp135 each coordinate Mg(2+). Arg140 contributes to the dimethylallyl diphosphate binding site. Arg141 is a binding site for isopentenyl diphosphate. Residues Lys216, Thr217, and Gln254 each coordinate dimethylallyl diphosphate.

It belongs to the FPP/GGPP synthase family. Asfivirus trans-prenyltransferase subfamily. It depends on Mg(2+) as a cofactor.

It is found in the host endoplasmic reticulum. Its subcellular location is the host membrane. The enzyme catalyses isopentenyl diphosphate + dimethylallyl diphosphate = (2E)-geranyl diphosphate + diphosphate. The catalysed reaction is isopentenyl diphosphate + (2E)-geranyl diphosphate = (2E,6E)-farnesyl diphosphate + diphosphate. It catalyses the reaction isopentenyl diphosphate + (2E,6E)-farnesyl diphosphate = (2E,6E,10E)-geranylgeranyl diphosphate + diphosphate. It carries out the reaction isopentenyl diphosphate + (2E,6E,10E)-geranylgeranyl diphosphate = (2E,6E,10E,14E)-geranylfarnesyl diphosphate + diphosphate. Its pathway is isoprenoid biosynthesis; farnesyl diphosphate biosynthesis; farnesyl diphosphate from geranyl diphosphate and isopentenyl diphosphate: step 1/1. It participates in isoprenoid biosynthesis; geranyl diphosphate biosynthesis; geranyl diphosphate from dimethylallyl diphosphate and isopentenyl diphosphate: step 1/1. It functions in the pathway isoprenoid biosynthesis; geranylgeranyl diphosphate biosynthesis; geranylgeranyl diphosphate from farnesyl diphosphate and isopentenyl diphosphate: step 1/1. Functionally, trans-prenyltransferase that catalyzes the sequential condensation of isopentenyl diphosphate (IPP) with different allylic diphosphates, such as dimethylallyl diphosphate (DMAPP), geranyl diphosphate (GPP), farnesyl diphosphate (FPP) and geranylgeranyl diphosphate (GGPP), farnesyl diphosphate being the best allylic substrate. The polypeptide is Trans-prenyltransferase (African swine fever virus (isolate Warthog/Namibia/Wart80/1980) (ASFV)).